A 926-amino-acid polypeptide reads, in one-letter code: Beta-mannosidase A (926 aa).

Residues 1–21 (MHVKAETVLALLTPAPPSVVG) form the signal peptide. N-linked (GlcNAc...) asparagine glycosylation is found at asparagine 40, asparagine 242, asparagine 277, asparagine 311, and asparagine 342. Glutamate 474 (proton donor) is an active-site residue. N-linked (GlcNAc...) asparagine glycosylation is found at asparagine 532, asparagine 603, asparagine 626, asparagine 653, asparagine 733, asparagine 756, asparagine 785, asparagine 793, asparagine 819, and asparagine 905.

This sequence belongs to the glycosyl hydrolase 2 family. Beta-mannosidase A subfamily. As to quaternary structure, homodimer.

Its subcellular location is the secreted. The catalysed reaction is Hydrolysis of terminal, non-reducing beta-D-mannose residues in beta-D-mannosides.. Its pathway is glycan metabolism; N-glycan degradation. Exoglycosidase that cleaves the single beta-linked mannose residue from the non-reducing end of beta-mannosidic oligosaccharides of various complexity and length. Involved in the degradation of polymeric mannan and galactomannan. In Aspergillus fumigatus (strain ATCC MYA-4609 / CBS 101355 / FGSC A1100 / Af293) (Neosartorya fumigata), this protein is Beta-mannosidase A (mndA).